The primary structure comprises 433 residues: tRNA-2-methylthio-N(6)-dimethylallyladenosine synthase (433 aa).

The region spanning 3–118 (KKLFIQTLGC…ISRVIHQEKA (116 aa)) is the MTTase N-terminal domain. Residues Cys-12, Cys-49, Cys-81, Cys-150, Cys-154, and Cys-157 each coordinate [4Fe-4S] cluster. Residues 136 to 369 (SRNDYKAMVN…QARHKEILEE (234 aa)) enclose the Radical SAM core domain. The 62-residue stretch at 372 to 433 (QKEVGAIHSV…YRAFLIGEPL (62 aa)) folds into the TRAM domain.

This sequence belongs to the methylthiotransferase family. MiaB subfamily. Monomer. The cofactor is [4Fe-4S] cluster.

Its subcellular location is the cytoplasm. The catalysed reaction is N(6)-dimethylallyladenosine(37) in tRNA + (sulfur carrier)-SH + AH2 + 2 S-adenosyl-L-methionine = 2-methylsulfanyl-N(6)-dimethylallyladenosine(37) in tRNA + (sulfur carrier)-H + 5'-deoxyadenosine + L-methionine + A + S-adenosyl-L-homocysteine + 2 H(+). Functionally, catalyzes the methylthiolation of N6-(dimethylallyl)adenosine (i(6)A), leading to the formation of 2-methylthio-N6-(dimethylallyl)adenosine (ms(2)i(6)A) at position 37 in tRNAs that read codons beginning with uridine. The polypeptide is tRNA-2-methylthio-N(6)-dimethylallyladenosine synthase (Wolinella succinogenes (strain ATCC 29543 / DSM 1740 / CCUG 13145 / JCM 31913 / LMG 7466 / NCTC 11488 / FDC 602W) (Vibrio succinogenes)).